A 203-amino-acid chain; its full sequence is Urease accessory protein UreG (203 aa).

12–19 (GPVGSGKT) contacts GTP.

Belongs to the SIMIBI class G3E GTPase family. UreG subfamily. Homodimer. UreD, UreF and UreG form a complex that acts as a GTP-hydrolysis-dependent molecular chaperone, activating the urease apoprotein by helping to assemble the nickel containing metallocenter of UreC. The UreE protein probably delivers the nickel.

It localises to the cytoplasm. Its function is as follows. Facilitates the functional incorporation of the urease nickel metallocenter. This process requires GTP hydrolysis, probably effectuated by UreG. In Nitrosococcus oceani (strain ATCC 19707 / BCRC 17464 / JCM 30415 / NCIMB 11848 / C-107), this protein is Urease accessory protein UreG.